The primary structure comprises 102 residues: Urease subunit beta (102 aa).

The protein belongs to the urease beta subunit family. In terms of assembly, heterotrimer of UreA (gamma), UreB (beta) and UreC (alpha) subunits. Three heterotrimers associate to form the active enzyme.

It is found in the cytoplasm. It carries out the reaction urea + 2 H2O + H(+) = hydrogencarbonate + 2 NH4(+). It participates in nitrogen metabolism; urea degradation; CO(2) and NH(3) from urea (urease route): step 1/1. The polypeptide is Urease subunit beta (Alteromonas mediterranea (strain DSM 17117 / CIP 110805 / LMG 28347 / Deep ecotype)).